The primary structure comprises 585 residues: Protein FAM13C (585 aa).

Disordered regions lie at residues 26-45 (PVSL…ENNK), 83-138 (SMGN…NAFK), and 171-216 (EAAQ…APED). Basic and acidic residues-rich tracts occupy residues 27 to 45 (VSLH…ENNK) and 99 to 112 (ESGR…ETEH). A Phosphoserine modification is found at Ser-131. Ser-238 is subject to Phosphoserine. 3 disordered regions span residues 250–282 (FNLD…DGKE), 349–391 (EEQG…EETP), and 441–477 (IPTI…DHLT). A compositionally biased stretch (polar residues) spans 262–275 (STQQFMMPRSSSRC). 2 positions are modified to phosphoserine: Ser-385 and Ser-386.

Belongs to the FAM13 family.

The chain is Protein FAM13C (FAM13C) from Homo sapiens (Human).